We begin with the raw amino-acid sequence, 392 residues long: Chorismate synthase (392 aa).

NADP(+)-binding residues include Arg40 and Arg46. FMN contacts are provided by residues 135–137 (RAS), 256–257 (QA), Gly300, 315–319 (KPIST), and Arg341.

The protein belongs to the chorismate synthase family. In terms of assembly, homotetramer. FMNH2 is required as a cofactor.

The catalysed reaction is 5-O-(1-carboxyvinyl)-3-phosphoshikimate = chorismate + phosphate. Its pathway is metabolic intermediate biosynthesis; chorismate biosynthesis; chorismate from D-erythrose 4-phosphate and phosphoenolpyruvate: step 7/7. In terms of biological role, catalyzes the anti-1,4-elimination of the C-3 phosphate and the C-6 proR hydrogen from 5-enolpyruvylshikimate-3-phosphate (EPSP) to yield chorismate, which is the branch point compound that serves as the starting substrate for the three terminal pathways of aromatic amino acid biosynthesis. This reaction introduces a second double bond into the aromatic ring system. This chain is Chorismate synthase, found in Acidothermus cellulolyticus (strain ATCC 43068 / DSM 8971 / 11B).